Reading from the N-terminus, the 849-residue chain is Putative endoplasmic reticulum mannosidase MNL2 (849 aa).

Residues 1 to 12 (MSIARLVYSLFR) lie on the Cytoplasmic side of the membrane. A helical; Signal-anchor for type II membrane protein transmembrane segment spans residues 13–32 (RVRSVLLLFITISLLFYYTF). Over 33-849 (QNEIDILNSY…TQGGHIIKKK (817 aa)) the chain is Lumenal. Asparagine 45 carries N-linked (GlcNAc...) asparagine glycosylation. The disordered stretch occupies residues 56 to 79 (HNTEGSSKLDPPDLSSTGSDRIAT). The cysteines at positions 559 and 598 are disulfide-linked.

It belongs to the glycosyl hydrolase 47 family. The cofactor is Ca(2+).

The protein localises to the endoplasmic reticulum membrane. Its pathway is protein modification; protein glycosylation. In terms of biological role, putative mannosidase involved in glycoprotein quality control since it is involved in the targeting of misfolded glycoproteins for ER-associated protein degradation (ERAD). This is Putative endoplasmic reticulum mannosidase MNL2 (MNL2) from Saccharomyces cerevisiae (strain ATCC 204508 / S288c) (Baker's yeast).